A 159-amino-acid polypeptide reads, in one-letter code: Ribose-5-phosphate isomerase B (159 aa).

D-ribulose 5-phosphate-binding positions include 8–9 and 67–71; these read DH and GSGNG. Glutamate 72 (proton acceptor) is an active-site residue. Residue histidine 99 is the Proton donor of the active site. D-ribulose 5-phosphate-binding residues include asparagine 100, arginine 110, arginine 134, and arginine 138.

It belongs to the LacAB/RpiB family. In terms of assembly, homodimer.

It carries out the reaction aldehydo-D-ribose 5-phosphate = D-ribulose 5-phosphate. It functions in the pathway carbohydrate degradation; pentose phosphate pathway; D-ribose 5-phosphate from D-ribulose 5-phosphate (non-oxidative stage): step 1/1. Catalyzes the interconversion of ribulose-5-P and ribose-5-P. The chain is Ribose-5-phosphate isomerase B from Mycolicibacterium paratuberculosis (strain ATCC BAA-968 / K-10) (Mycobacterium paratuberculosis).